The chain runs to 29 residues: Cliotide T18 (29 aa).

A cross-link (cyclopeptide (Gly-Asn)) is located at residues 1–29 (GLPICGETCFTGTCYTPGCTCSYPVCKKN). 3 disulfide bridges follow: Cys-5–Cys-19, Cys-9–Cys-21, and Cys-14–Cys-26.

In terms of processing, contains 3 disulfide bonds. This is a cyclic peptide. Expressed in root nodules but not in seed.

Functionally, probably participates in a plant defense mechanism. The sequence is that of Cliotide T18 from Clitoria ternatea (Butterfly pea).